We begin with the raw amino-acid sequence, 114 residues long: Replication initiation control protein YabA (114 aa).

4 residues coordinate Zn(2+): histidine 79, cysteine 81, cysteine 95, and cysteine 98.

It belongs to the YabA family. Homotetramer. Interacts with both DnaA and DnaN, acting as a bridge between these two proteins. Requires Zn(2+) as cofactor.

Its subcellular location is the cytoplasm. It is found in the nucleoid. Its function is as follows. Involved in control of chromosome replication initiation. Inhibits the cooperative binding of DnaA to the oriC region, thus negatively regulating initiation of chromosome replication. Inhibits the ability of DnaA-ATP to form a helix on DNA; does not disassemble preformed DnaA-DNA helices. Decreases the residence time of DnaA on the chromosome at its binding sites (oriC, replication forks and promoter-binding sites). Tethers DnaA to the replication machinery via the DNA polymerase beta sliding clamp subunit (dnaN). Associates with oriC and other DnaA targets on the chromosome in a DnaA-dependent manner. This is Replication initiation control protein YabA from Lactobacillus johnsonii (strain CNCM I-12250 / La1 / NCC 533).